Reading from the N-terminus, the 300-residue chain is Tyrosine recombinase XerC (300 aa).

Positions M1–V86 constitute a Core-binding (CB) domain. The Tyr recombinase domain occupies T107 to D294. Residues R151, K175, H246, R249, and H272 contribute to the active site. Catalysis depends on Y281, which acts as the O-(3'-phospho-DNA)-tyrosine intermediate.

The protein belongs to the 'phage' integrase family. XerC subfamily. As to quaternary structure, forms a cyclic heterotetrameric complex composed of two molecules of XerC and two molecules of XerD.

The protein localises to the cytoplasm. In terms of biological role, site-specific tyrosine recombinase, which acts by catalyzing the cutting and rejoining of the recombining DNA molecules. The XerC-XerD complex is essential to convert dimers of the bacterial chromosome into monomers to permit their segregation at cell division. It also contributes to the segregational stability of plasmids. The polypeptide is Tyrosine recombinase XerC (Mycobacterium sp. (strain JLS)).